Here is a 363-residue protein sequence, read N- to C-terminus: Ribonuclease P protein subunit p40 (363 aa).

In terms of assembly, component of nuclear RNase P and RNase MRP ribonucleoproteins. RNase P consists of a catalytic RNA moiety and about 10 protein subunits; POP1, POP4, POP5, POP7, RPP14, RPP21, RPP25, RPP30, RPP38 and RPP40. Within the RNase P complex, POP1, POP7 and RPP25 form the 'finger' subcomplex, POP5, RPP14, RPP40 and homodimeric RPP30 form the 'palm' subcomplex, and RPP21, POP4 and RPP38 form the 'wrist' subcomplex. All subunits of the RNase P complex interact with the catalytic RNA. Several subunits of RNase P are also part of the RNase MRP complex. RNase MRP consists of a catalytic RNA moiety and about 8 protein subunits; POP1, POP7, RPP25, RPP30, RPP38, RPP40 and possibly also POP4 and POP5.

The protein resides in the nucleus. It localises to the nucleolus. Component of ribonuclease P, a ribonucleoprotein complex that generates mature tRNA molecules by cleaving their 5'-ends. Also a component of the MRP ribonuclease complex, which cleaves pre-rRNA sequences. The polypeptide is Ribonuclease P protein subunit p40 (Rpp40) (Rattus norvegicus (Rat)).